A 126-amino-acid polypeptide reads, in one-letter code: MADITKEDVLEFIANMTVLELSELIKDIEEKFGVSAAAPVAAVAMAGPAAADAEEEKTEFDVILLSAGDKKIQVIKEVRAITGLGLKEAKALVEEAPKAVKEGIAKEDAEKVKEQLEGAGAQVDIK.

Belongs to the bacterial ribosomal protein bL12 family. As to quaternary structure, homodimer. Part of the ribosomal stalk of the 50S ribosomal subunit. Forms a multimeric L10(L12)X complex, where L10 forms an elongated spine to which 2 to 4 L12 dimers bind in a sequential fashion. Binds GTP-bound translation factors.

Its function is as follows. Forms part of the ribosomal stalk which helps the ribosome interact with GTP-bound translation factors. Is thus essential for accurate translation. This Desulfatibacillum aliphaticivorans protein is Large ribosomal subunit protein bL12.